A 445-amino-acid polypeptide reads, in one-letter code: MNRESFLLLLVLLFALPLHLQASSPCNNMADTTCISDSAKMFPPAIGVYHVKPMKNTLRHSLPLVAASLLTFNVDDNIRELRFTGAGSFHTKIDNVSQLVPLMAQLSMRGFGYKGRSKSWGKMLVSDALGMALMGGMVNAGKYSFGRLRPDGTAANSYPSGHTATAFACATLFHLEYGSRSPWYSVAGYTVASFTGISRIVNNRHWASDVLCGAAVGILVGELGYWISDLIFRDPTGYNYKLTKKQEGTLESMVISLSTGNRYINRQMDFEGKTVERTDAFGMNLKTTFNPSFARWVRIGLQFSVSTEKQKGLTRERPAKVFVAPAISLGLSAGVEWHPWQRASVWAEILPSILFRTDFTNAQDKPDEMSSKLHRRSSFQPAFQVGVAYRVSDHMGIEAHAGYQLGEAVYHLMEETSTWSIIKKRATVPYRGFEFAVGLQFYPFR.

Residues 1-22 form the signal peptide; it reads MNRESFLLLLVLLFALPLHLQA.

The protein resides in the periplasm. It functions in the pathway bacterial outer membrane biogenesis; LPS lipid A biosynthesis. In terms of biological role, removes the 1-phosphate group from lipid A species. Absence of phosphate groups in lipid A renders the bacteria resistant to host-derived cationic antimicrobial peptides (CAMP) and allowing it to camouflage itself from the host innate immune response. The sequence is that of Lipid A 1-phosphatase from Porphyromonas gingivalis (strain ATCC 33277 / DSM 20709 / CIP 103683 / JCM 12257 / NCTC 11834 / 2561).